Here is a 262-residue protein sequence, read N- to C-terminus: ATP synthase subunit a (262 aa).

5 helical membrane passes run 24 to 44 (AVHL…LVVF), 85 to 105 (IAPL…IDLV), 129 to 149 (DISA…FYTV), 194 to 214 (LFGN…MYMA), and 228 to 248 (LVWA…FMML).

Belongs to the ATPase A chain family. In terms of assembly, F-type ATPases have 2 components, CF(1) - the catalytic core - and CF(0) - the membrane proton channel. CF(1) has five subunits: alpha(3), beta(3), gamma(1), delta(1), epsilon(1). CF(0) has three main subunits: a(1), b(2) and c(9-12). The alpha and beta chains form an alternating ring which encloses part of the gamma chain. CF(1) is attached to CF(0) by a central stalk formed by the gamma and epsilon chains, while a peripheral stalk is formed by the delta and b chains.

The protein resides in the cell inner membrane. Functionally, key component of the proton channel; it plays a direct role in the translocation of protons across the membrane. The chain is ATP synthase subunit a from Haemophilus ducreyi (strain 35000HP / ATCC 700724).